The primary structure comprises 307 residues: Small ribosomal subunit biogenesis GTPase RsgA (307 aa).

One can recognise a CP-type G domain in the interval 80 to 237 (KADLRQTIVS…IVDTPGIKEF (158 aa)). GTP is bound by residues 129 to 132 (NKID) and 180 to 188 (GQSGVGKSS). Residues C261, C266, H268, and C274 each contribute to the Zn(2+) site.

Belongs to the TRAFAC class YlqF/YawG GTPase family. RsgA subfamily. In terms of assembly, monomer. Associates with 30S ribosomal subunit, binds 16S rRNA. Zn(2+) is required as a cofactor.

It localises to the cytoplasm. One of several proteins that assist in the late maturation steps of the functional core of the 30S ribosomal subunit. Helps release RbfA from mature subunits. May play a role in the assembly of ribosomal proteins into the subunit. Circularly permuted GTPase that catalyzes slow GTP hydrolysis, GTPase activity is stimulated by the 30S ribosomal subunit. This Borreliella burgdorferi (strain ATCC 35210 / DSM 4680 / CIP 102532 / B31) (Borrelia burgdorferi) protein is Small ribosomal subunit biogenesis GTPase RsgA.